A 20-amino-acid polypeptide reads, in one-letter code: Collagenolytic protease 36 kDa C (20 aa).

The region spanning I1–D20 is the Peptidase S1 domain. A disordered region spans residues I1–D20.

The protein belongs to the peptidase S1 family.

The enzyme catalyses Hydrolysis of proteins, with broad specificity for peptide bonds. Native collagen is cleaved about 75% of the length of the molecule from the N-terminus. Low activity on small molecule substrates of both trypsin and chymotrypsin.. This enzyme is a serine protease capable of degrading the native triple helix of collagen. The polypeptide is Collagenolytic protease 36 kDa C (Paralithodes camtschaticus (Red king crab)).